The chain runs to 648 residues: MSQISLTFPDGNARDYPAGVTAAEVAASIAPSLAKNAISASLDGQHIDLQWPIAASGRIAINTMKDSEPALELIRHDLAHIMARAVQELWPDVKVTIGPVRDQGWFYDFDRAEPFTPEDLGAIEQRMKQIIAARDPVRTEVWDRDRARAHYEAQGEPFKIELLDRIPEGEPIRMYWHGDWQDLCRGPHLQHTGQVPADAFKLTHVAGAYWLGDASRPMLQRIYGVAFRNRDDLKAHLTMLEEAAKRDHRKLGREMELFHFQEEAPGMVFWHPNGWSIYRELEAYMRRRLIRADYKEIKTPQVVDRILWEKSGHWEAYRENMFIVEVDEEGAKEKRINALKPMNCPCHVQVYNQGLKSYRDLPLRLAEFGSCHRYEPSGSMHGLMRVRGFVQDDAHIFCTEDQIEAECAGFIGLLSSVYKDLGFEKFDIKLSTRPDVRVGSDEIWDKAEAALKGAIEHLDLPYEVNPGDGAFYGPKLDFKLTDAIGREWQCGTFQCDFNLPQRLEAEYVGEDGAKHMPVMLHRAVLGSFERFIGILIENYSGKLPLWLAPRQVVVASIVSGADDYVHEVVAALRAAGLRAEADTRNEKINYKVREHSVGKVPVIMAVGLKEVEERSVSIRRLDRQGSESHGLESAIATLRAEATPPDLR.

The 63-residue stretch at 1–63 (MSQISLTFPD…AASGRIAINT (63 aa)) folds into the TGS domain. The tract at residues 247 to 544 (DHRKLGREME…LIENYSGKLP (298 aa)) is catalytic. 3 residues coordinate Zn(2+): Cys344, His395, and His521.

Belongs to the class-II aminoacyl-tRNA synthetase family. As to quaternary structure, homodimer. Requires Zn(2+) as cofactor.

It is found in the cytoplasm. The enzyme catalyses tRNA(Thr) + L-threonine + ATP = L-threonyl-tRNA(Thr) + AMP + diphosphate + H(+). In terms of biological role, catalyzes the attachment of threonine to tRNA(Thr) in a two-step reaction: L-threonine is first activated by ATP to form Thr-AMP and then transferred to the acceptor end of tRNA(Thr). Also edits incorrectly charged L-seryl-tRNA(Thr). The polypeptide is Threonine--tRNA ligase (Paracoccus denitrificans (strain Pd 1222)).